We begin with the raw amino-acid sequence, 245 residues long: Tetraspanin-6 (245 aa).

Topologically, residues 1-19 (MASPSRRLQTKPVITCLKS) are cytoplasmic. The helical transmembrane segment at 20–40 (VLLIYTFIFWITGVILLAVGI) threads the bilayer. Residues 41–59 (WGKVSLENYFSLLNEKATN) lie on the Extracellular side of the membrane. The chain crosses the membrane as a helical span at residues 60–80 (VPFVLIGTGTVIILLGTFGCF). Over 81 to 93 (ATCRTSAWMLKLY) the chain is Cytoplasmic. Residues 94-114 (AMFLTLIFLVELVAAIVGFVF) form a helical membrane-spanning segment. The Extracellular segment spans residues 115-208 (RHEIKNSFKS…IKVMTTIESE (94 aa)). The N-linked (GlcNAc...) asparagine glycan is linked to asparagine 134. A helical membrane pass occupies residues 209-229 (MGVVAGISFGVACFQLIGIFL). The Cytoplasmic portion of the chain corresponds to 230–245 (AYCLSRAITNNQYEIV).

The protein belongs to the tetraspanin (TM4SF) family.

Its subcellular location is the membrane. The chain is Tetraspanin-6 (Tspan6) from Mus musculus (Mouse).